Consider the following 570-residue polypeptide: Proline--tRNA ligase (570 aa).

The protein belongs to the class-II aminoacyl-tRNA synthetase family. ProS type 1 subfamily. Homodimer.

The protein localises to the cytoplasm. The catalysed reaction is tRNA(Pro) + L-proline + ATP = L-prolyl-tRNA(Pro) + AMP + diphosphate. Its function is as follows. Catalyzes the attachment of proline to tRNA(Pro) in a two-step reaction: proline is first activated by ATP to form Pro-AMP and then transferred to the acceptor end of tRNA(Pro). As ProRS can inadvertently accommodate and process non-cognate amino acids such as alanine and cysteine, to avoid such errors it has two additional distinct editing activities against alanine. One activity is designated as 'pretransfer' editing and involves the tRNA(Pro)-independent hydrolysis of activated Ala-AMP. The other activity is designated 'posttransfer' editing and involves deacylation of mischarged Ala-tRNA(Pro). The misacylated Cys-tRNA(Pro) is not edited by ProRS. In Pelotomaculum thermopropionicum (strain DSM 13744 / JCM 10971 / SI), this protein is Proline--tRNA ligase.